We begin with the raw amino-acid sequence, 475 residues long: Bifunctional protein HldE (475 aa).

The interval 1–320 (MNSSYLNFKD…AIMFQRSHNT (320 aa)) is ribokinase. 196-199 (NLLE) is a binding site for ATP. Residue D265 is part of the active site. The interval 346–475 (FTNGCFDILH…TTSIIEKANL (130 aa)) is cytidylyltransferase.

The protein in the N-terminal section; belongs to the carbohydrate kinase PfkB family. This sequence in the C-terminal section; belongs to the cytidylyltransferase family. Homodimer.

It carries out the reaction D-glycero-beta-D-manno-heptose 7-phosphate + ATP = D-glycero-beta-D-manno-heptose 1,7-bisphosphate + ADP + H(+). It catalyses the reaction D-glycero-beta-D-manno-heptose 1-phosphate + ATP + H(+) = ADP-D-glycero-beta-D-manno-heptose + diphosphate. It participates in nucleotide-sugar biosynthesis; ADP-L-glycero-beta-D-manno-heptose biosynthesis; ADP-L-glycero-beta-D-manno-heptose from D-glycero-beta-D-manno-heptose 7-phosphate: step 1/4. Its pathway is nucleotide-sugar biosynthesis; ADP-L-glycero-beta-D-manno-heptose biosynthesis; ADP-L-glycero-beta-D-manno-heptose from D-glycero-beta-D-manno-heptose 7-phosphate: step 3/4. In terms of biological role, catalyzes the phosphorylation of D-glycero-D-manno-heptose 7-phosphate at the C-1 position to selectively form D-glycero-beta-D-manno-heptose-1,7-bisphosphate. Functionally, catalyzes the ADP transfer from ATP to D-glycero-beta-D-manno-heptose 1-phosphate, yielding ADP-D-glycero-beta-D-manno-heptose. The sequence is that of Bifunctional protein HldE from Marinomonas sp. (strain MWYL1).